We begin with the raw amino-acid sequence, 380 residues long: 1-deoxy-D-xylulose 5-phosphate reductoisomerase 2 (380 aa).

8 residues coordinate NADPH: Ser10, Gly11, Ser12, Ile13, Gly36, Lys37, Asn38, and Asn120. Position 121 (Lys121) interacts with 1-deoxy-D-xylulose 5-phosphate. Glu122 lines the NADPH pocket. Residue Asp146 participates in Mn(2+) binding. Residues Ser147, Glu148, Ser172, and His195 each coordinate 1-deoxy-D-xylulose 5-phosphate. Glu148 is a binding site for Mn(2+). Gly201 contacts NADPH. Positions 208, 213, 214, and 217 each coordinate 1-deoxy-D-xylulose 5-phosphate. Residue Glu217 coordinates Mn(2+).

This sequence belongs to the DXR family. Mg(2+) is required as a cofactor. The cofactor is Mn(2+).

The enzyme catalyses 2-C-methyl-D-erythritol 4-phosphate + NADP(+) = 1-deoxy-D-xylulose 5-phosphate + NADPH + H(+). It participates in isoprenoid biosynthesis; isopentenyl diphosphate biosynthesis via DXP pathway; isopentenyl diphosphate from 1-deoxy-D-xylulose 5-phosphate: step 1/6. Catalyzes the NADPH-dependent rearrangement and reduction of 1-deoxy-D-xylulose-5-phosphate (DXP) to 2-C-methyl-D-erythritol 4-phosphate (MEP). The chain is 1-deoxy-D-xylulose 5-phosphate reductoisomerase 2 from Bacillus anthracis.